The following is a 310-amino-acid chain: Polyprenyl transferase ntnF (310 aa).

A run of 8 helical transmembrane segments spans residues 30–50, 63–83, 110–130, 154–174, 185–205, 230–250, 255–275, and 286–306; these read HTPE…FYAI, FLGI…WNDI, AMVA…AMLG, IWAP…PPWV, LPAS…LIYA, ACLT…AFEA, FLWV…ILSL, and IFLV…TDVW.

The protein belongs to the UbiA prenyltransferase family. The cofactor is Mg(2+).

Its subcellular location is the membrane. Its pathway is secondary metabolite biosynthesis; terpenoid biosynthesis. Olyprenyl transferase; part of the gene cluster that mediates the biosynthesis of the meroterpenoids nectripenoids A and B, as well as cochliquninone D and isocochliquninone E. The pathway probably begins with the HR-PKS ntnH that catalyzes two chain-extension steps to form a reduced triketide, which then primes the SAT domain in the NR-PKS ntnG to initiate three more cycles of extension to give a linear hexaketide corresponding to the polyketide part of nectripenoids. The FAD-dependent monooxygenase ntnJ then performs an oxidative decarboxylation at C11 of the ntnH/ntnG product, via an electrophilic aromatic hydroxylation with concomitant ipso-decarboxylation. The membrane-bound polyprenyl transferase ntnF then introduces a farnesyl group before the FAD-dependent monooxygenase ntnK functions as the first epoxidase on terminal C12'-C13' olefin, followed by a second epoxidation on C7'-C8' catalyzed by ntnA. The terpene cyclase/mutase ntnI then initiates the sequential tricyclic ring formation through protonation of the terminal epoxide and catalyzes the regioselective and stereoselective 6/6/6-tricyclic ring formation. The cytochrome P450 monooxygenase ntnM may then hydroxylate C1'. This is Polyprenyl transferase ntnF from Nectria sp.